The sequence spans 331 residues: Cytosolic 5'-nucleotidase 3A (331 aa).

Asp-83 serves as the catalytic Nucleophile. Asp-83 and Asp-85 together coordinate Mg(2+). Catalysis depends on Asp-85, which acts as the Proton donor. Glu-130 is a binding site for CMP. N(7)-methyl-GMP-binding residues include Glu-130 and Ser-151. Residues Ser-198–Gly-200 and Lys-247 contribute to the substrate site. Asp-272 provides a ligand contact to Mg(2+). Ser-273 is modified (phosphoserine).

The protein belongs to the pyrimidine 5'-nucleotidase family. In terms of assembly, monomer. As to expression, isoform 2 is highly expressed in the brain, heart, spleen, kidney and blood. Isoform 2 is expressed (at protein level) in the spleen, skeletal muscle and gastrointestinal epithelia.

It is found in the cytoplasm. It carries out the reaction N(7)-methyl-GMP + H2O = N(7)-methylguanosine + phosphate. The enzyme catalyses a ribonucleoside 5'-phosphate + H2O = a ribonucleoside + phosphate. In terms of biological role, nucleotidase which shows specific activity towards cytidine monophosphate (CMP) and 7-methylguanosine monophosphate (m(7)GMP). CMP seems to be the preferred substrate. The protein is Cytosolic 5'-nucleotidase 3A (Nt5c3a) of Mus musculus (Mouse).